A 493-amino-acid polypeptide reads, in one-letter code: uncharacterized protein (493 aa).

Positions 96–124 (TTVAKASPPPAKPASAPTEITWKGSPQFT) are disordered.

This is an uncharacterized protein from Caulobacter vibrioides (strain ATCC 19089 / CIP 103742 / CB 15) (Caulobacter crescentus).